The sequence spans 229 residues: Secretory carrier-associated membrane protein 4 (229 aa).

Over 1 to 39 (MSEKENNFPPLPKFIPVKPCFYQNFSDEIPVEHQVLVKR) the chain is Cytoplasmic. Helical transmembrane passes span 40-60 (IYRLWMFYCATLGVNLIACLA), 61-81 (WWIGGGSGTNFGLAFVWLLLF), 105-125 (FMAFFFIFGAQFVLTVIQAIG), and 149-169 (VVMLLPAIMFSVSAAMMAIAI). Residues 170–229 (MKVHRIYRGAGGSFQKAQTEWNTGTWRNPPSREAQYNNFSGNSLPEYPTVPSYPGSGQWP) lie on the Cytoplasmic side of the membrane. The residue at position 194 (T194) is a Phosphothreonine. The disordered stretch occupies residues 208–229 (FSGNSLPEYPTVPSYPGSGQWP).

Belongs to the SCAMP family.

Its subcellular location is the membrane. Functionally, probably involved in membrane protein trafficking. This Homo sapiens (Human) protein is Secretory carrier-associated membrane protein 4 (SCAMP4).